We begin with the raw amino-acid sequence, 369 residues long: Aminomethyltransferase (369 aa).

This sequence belongs to the GcvT family. As to quaternary structure, the glycine cleavage system is composed of four proteins: P, T, L and H.

The catalysed reaction is N(6)-[(R)-S(8)-aminomethyldihydrolipoyl]-L-lysyl-[protein] + (6S)-5,6,7,8-tetrahydrofolate = N(6)-[(R)-dihydrolipoyl]-L-lysyl-[protein] + (6R)-5,10-methylene-5,6,7,8-tetrahydrofolate + NH4(+). In terms of biological role, the glycine cleavage system catalyzes the degradation of glycine. The protein is Aminomethyltransferase of Xanthomonas axonopodis pv. citri (strain 306).